Consider the following 256-residue polypeptide: 3-hydroxy-5-phosphonooxypentane-2,4-dione thiolase (256 aa).

Catalysis depends on lysine 168, which acts as the Schiff-base intermediate with substrate.

It belongs to the DeoC/FbaB aldolase family. Homodecamer.

Its subcellular location is the cytoplasm. The catalysed reaction is dihydroxyacetone phosphate + acetyl-CoA = 3-hydroxy-2,4-dioxopentyl phosphate + CoA. Involved in the degradation of phospho-AI-2, thereby terminating induction of the lsr operon and closing the AI-2 signaling cycle. Catalyzes the transfer of an acetyl moiety from 3-hydroxy-5-phosphonooxypentane-2,4-dione to CoA to form glycerone phosphate and acetyl-CoA. This is 3-hydroxy-5-phosphonooxypentane-2,4-dione thiolase (lsrF) from Shigella flexneri serotype 5b (strain 8401).